The following is a 100-amino-acid chain: Small ribosomal subunit protein uS14c (100 aa).

It belongs to the universal ribosomal protein uS14 family. In terms of assembly, part of the 30S ribosomal subunit.

It is found in the plastid. The protein localises to the chloroplast. Its function is as follows. Binds 16S rRNA, required for the assembly of 30S particles. This Ostreococcus tauri protein is Small ribosomal subunit protein uS14c.